Here is a 394-residue protein sequence, read N- to C-terminus: Na(+)/H(+) antiporter NhaA 2 (394 aa).

11 consecutive transmembrane segments (helical) span residues 13–33, 58–78, 93–113, 124–144, 153–173, 176–196, 208–228, 260–280, 291–311, 327–347, and 361–381; these read FGGV…NGFL, LILW…GLEL, IALP…IFWA, GWAI…MLLG, IFLL…IAIF, TKLS…LWVL, ILVT…ATIA, YFIL…GVQI, IFFG…YIFI, FYGV…VNSL, and LGIL…LLVF.

Belongs to the NhaA Na(+)/H(+) (TC 2.A.33) antiporter family.

It is found in the cell inner membrane. The catalysed reaction is Na(+)(in) + 2 H(+)(out) = Na(+)(out) + 2 H(+)(in). Functionally, na(+)/H(+) antiporter that extrudes sodium in exchange for external protons. This Campylobacter fetus subsp. fetus (strain 82-40) protein is Na(+)/H(+) antiporter NhaA 2.